Reading from the N-terminus, the 739-residue chain is Sulfate transporter (739 aa).

The interval 1–44 (MSSENKEQHNLSPRDLPEEAYGFPPELPLGAQRGSSTDLRQFEP) is disordered. Ser12 is subject to Phosphoserine. A run of 2 helical transmembrane segments spans residues 112–132 (MMSGLIVGILLVPQSIAYSLL) and 137–157 (PIYGLYTSFFASIIYFLFGTS). Asn205 carries N-linked (GlcNAc...) asparagine glycosylation. 2 helical membrane passes run 227 to 247 (FMAGVYQVAMGFFQVGFVSVY) and 255 to 275 (GFVTGASFTILTSQAKYLLGL). N-linked (GlcNAc...) asparagine glycosylation is present at Asn357. The next 4 membrane-spanning stretches (helical) occupy residues 378–398 (LIPNVAVDAIAISIIGFAITV), 420–440 (AIGFCNIIPSFFHCITTSAAL), 455–475 (LSAIVTSLVLLLVLLLIAPLF), and 524–544 (LLSTEIGLLVGVCFSMFCVIL). Positions 568-719 (TYKNLRSKSG…YSLSEAVAFA (152 aa)) constitute an STAS domain.

It belongs to the SLC26A/SulP transporter (TC 2.A.53) family. In terms of processing, N-glycosylated. In terms of tissue distribution, cartilage and intestine. Expressed in the kidney (at protein level).

It localises to the cell membrane. The protein resides in the apical cell membrane. The enzyme catalyses oxalate(in) + sulfate(out) = oxalate(out) + sulfate(in). It catalyses the reaction sulfate(out) + 2 chloride(in) = sulfate(in) + 2 chloride(out). The catalysed reaction is oxalate(out) + 2 chloride(in) = oxalate(in) + 2 chloride(out). It carries out the reaction bromide(in) + chloride(out) = bromide(out) + chloride(in). The enzyme catalyses nitrate(in) + chloride(out) = nitrate(out) + chloride(in). It catalyses the reaction iodide(in) + chloride(out) = iodide(out) + chloride(in). Its function is as follows. Sulfate transporter which mediates sulfate uptake into chondrocytes in order to maintain adequate sulfation of proteoglycans which is needed for cartilage development. Mediates electroneutral anion exchange of sulfate ions for oxalate ions, sulfate and oxalate ions for chloride and/or hydroxyl ions and chloride ions for bromide, iodide and nitrate ions. The coupling of sulfate transport to both hydroxyl and chloride ions likely serves to ensure transport at both acidic pH when most sulfate uptake is mediated by sulfate-hydroxide exchange and alkaline pH when most sulfate uptake is mediated by sulfate-chloride exchange. Essential for chondrocyte proliferation, differentiation and cell size expansion. This Rattus norvegicus (Rat) protein is Sulfate transporter (Slc26a2).